A 233-amino-acid chain; its full sequence is Hydroxyacylglutathione hydrolase (233 aa).

Zn(2+) is bound by residues His-52, His-54, Asp-56, His-57, His-108, Asp-125, and His-163.

The protein belongs to the metallo-beta-lactamase superfamily. Glyoxalase II family. As to quaternary structure, monomer. Zn(2+) is required as a cofactor.

It carries out the reaction an S-(2-hydroxyacyl)glutathione + H2O = a 2-hydroxy carboxylate + glutathione + H(+). It functions in the pathway secondary metabolite metabolism; methylglyoxal degradation; (R)-lactate from methylglyoxal: step 2/2. Its function is as follows. Thiolesterase that catalyzes the hydrolysis of S-D-lactoyl-glutathione to form glutathione and D-lactic acid. In Histophilus somni (strain 129Pt) (Haemophilus somnus), this protein is Hydroxyacylglutathione hydrolase.